Here is a 331-residue protein sequence, read N- to C-terminus: Anthranilate phosphoribosyltransferase (331 aa).

Residues glycine 79, 82 to 83, threonine 87, 89 to 92, 107 to 115, and serine 119 contribute to the 5-phospho-alpha-D-ribose 1-diphosphate site; these read GD, NVST, and KHGNYGVSS. Residue glycine 79 participates in anthranilate binding. Residue serine 91 participates in Mg(2+) binding. An anthranilate-binding site is contributed by asparagine 110. An anthranilate-binding site is contributed by arginine 165. Positions 223 and 224 each coordinate Mg(2+).

Belongs to the anthranilate phosphoribosyltransferase family. As to quaternary structure, homodimer. It depends on Mg(2+) as a cofactor.

The catalysed reaction is N-(5-phospho-beta-D-ribosyl)anthranilate + diphosphate = 5-phospho-alpha-D-ribose 1-diphosphate + anthranilate. It participates in amino-acid biosynthesis; L-tryptophan biosynthesis; L-tryptophan from chorismate: step 2/5. Functionally, catalyzes the transfer of the phosphoribosyl group of 5-phosphorylribose-1-pyrophosphate (PRPP) to anthranilate to yield N-(5'-phosphoribosyl)-anthranilate (PRA). The sequence is that of Anthranilate phosphoribosyltransferase from Christiangramia forsetii (strain DSM 17595 / CGMCC 1.15422 / KT0803) (Gramella forsetii).